We begin with the raw amino-acid sequence, 438 residues long: uncharacterized protein (438 aa).

The next 12 helical transmembrane spans lie at 22–42, 59–79, 89–109, 137–157, 174–194, 237–257, 258–278, 292–312, 330–350, 356–376, 380–400, and 418–438; these read VSPIVALTITPIVFALIGGFG, SAALLLFAILFFGILIDAGLF, IVKGDPVKIAIGSAVLAMLIA, MVMATLAMLSLSIVSGMTPWG, FFVPLLPTMLGGIACVIFLAF, LIYLNLFLVISIMVFIVLGTK, HPSVLFLIGFVLALTINYPNV, AITVVLLVFSAGVFAGILSGT, MGGFFPVIVALTSIPFTFVLS, FGMVPIFAEAASAYGIEPVEI, SIMGQPVHLMSPLVASTVLLV, and AVITSLVITLLAIITGAITIL.

It belongs to the CitM (TC 2.A.11) transporter family.

The protein resides in the cell membrane. Its function is as follows. Transports the free citrate anion. This is an uncharacterized protein from Bacillus subtilis (strain 168).